We begin with the raw amino-acid sequence, 185 residues long: GTP cyclohydrolase 1 (185 aa).

Residues Cys-75, His-78, and Cys-146 each contribute to the Zn(2+) site.

The protein belongs to the GTP cyclohydrolase I family. In terms of assembly, homomer.

The catalysed reaction is GTP + H2O = 7,8-dihydroneopterin 3'-triphosphate + formate + H(+). Its pathway is cofactor biosynthesis; 7,8-dihydroneopterin triphosphate biosynthesis; 7,8-dihydroneopterin triphosphate from GTP: step 1/1. The sequence is that of GTP cyclohydrolase 1 from Clostridium kluyveri (strain NBRC 12016).